We begin with the raw amino-acid sequence, 259 residues long: DNA repair protein RecO (259 aa).

This sequence belongs to the RecO family.

Its function is as follows. Involved in DNA repair and RecF pathway recombination. The chain is DNA repair protein RecO from Syntrophus aciditrophicus (strain SB).